The following is a 146-amino-acid chain: uncharacterized protein (146 aa).

This is an uncharacterized protein from Sinorhizobium fredii (strain NBRC 101917 / NGR234).